Reading from the N-terminus, the 89-residue chain is Small ribosomal subunit protein bS16 (89 aa).

The protein belongs to the bacterial ribosomal protein bS16 family.

The polypeptide is Small ribosomal subunit protein bS16 (Psychrobacter arcticus (strain DSM 17307 / VKM B-2377 / 273-4)).